The sequence spans 480 residues: Protein nucleotidyltransferase YdiU (480 aa).

Residues Gly86, Gly88, Arg89, Lys109, Asp121, Gly122, Arg172, and Arg179 each coordinate ATP. Asp248 serves as the catalytic Proton acceptor. Mg(2+) contacts are provided by Asn249 and Asp258. An ATP-binding site is contributed by Asp258.

This sequence belongs to the SELO family. It depends on Mg(2+) as a cofactor. Requires Mn(2+) as cofactor.

The catalysed reaction is L-seryl-[protein] + ATP = 3-O-(5'-adenylyl)-L-seryl-[protein] + diphosphate. It carries out the reaction L-threonyl-[protein] + ATP = 3-O-(5'-adenylyl)-L-threonyl-[protein] + diphosphate. It catalyses the reaction L-tyrosyl-[protein] + ATP = O-(5'-adenylyl)-L-tyrosyl-[protein] + diphosphate. The enzyme catalyses L-histidyl-[protein] + UTP = N(tele)-(5'-uridylyl)-L-histidyl-[protein] + diphosphate. The catalysed reaction is L-seryl-[protein] + UTP = O-(5'-uridylyl)-L-seryl-[protein] + diphosphate. It carries out the reaction L-tyrosyl-[protein] + UTP = O-(5'-uridylyl)-L-tyrosyl-[protein] + diphosphate. In terms of biological role, nucleotidyltransferase involved in the post-translational modification of proteins. It can catalyze the addition of adenosine monophosphate (AMP) or uridine monophosphate (UMP) to a protein, resulting in modifications known as AMPylation and UMPylation. The protein is Protein nucleotidyltransferase YdiU of Klebsiella pneumoniae (strain 342).